Here is a 174-residue protein sequence, read N- to C-terminus: Guided entry of tail-anchored proteins factor 1 (174 aa).

At 1-8 the chain is on the lumenal side; the sequence is MSAAEADR. A helical membrane pass occupies residues 9 to 29; sequence WAWLLVLSFVFGCNVLRILLP. The Cytoplasmic portion of the chain corresponds to 30 to 99; that stretch reads SFSFFMSRVL…VKARTAQLAK (70 aa). The stretch at 39–94 forms a coiled coil; sequence LQKDAEQESQMRAEIQGMKQELSTVNMMDEFARYARLERKINKMTDKLKTHVKART. The interval 39 to 97 is interaction with GET3/TRC40; it reads LQKDAEQESQMRAEIQGMKQELSTVNMMDEFARYARLERKINKMTDKLKTHVKARTAQL. Residues 100-120 traverse the membrane as a helical segment; it reads IKWVISVAFYILQAALMVSLI. The Lumenal segment spans residues 121-148; sequence WKYYSVPVAVVPSKWITPLDRLVAFPTR. A helical transmembrane segment spans residues 149 to 169; sequence VAGGVGITCWILVCNKVVAIV. The Cytoplasmic portion of the chain corresponds to 170 to 174; that stretch reads LHPFS.

It belongs to the WRB/GET1 family. Component of the Golgi to ER traffic (GET) complex, which is composed of GET1/WRB, CAMLG/GET2 and GET3. Within the complex, GET1 and CAMLG form a heterotetramer which is stabilized by phosphatidylinositol binding and which binds to the GET3 homodimer. Interacts with CAMLG (via C-terminus). GET3 shows a higher affinity for CAMLG than for GET1.

It is found in the endoplasmic reticulum membrane. Its function is as follows. Required for the post-translational delivery of tail-anchored (TA) proteins to the endoplasmic reticulum. Together with CAMLG/GET2, acts as a membrane receptor for soluble GET3/TRC40, which recognizes and selectively binds the transmembrane domain of TA proteins in the cytosol. Required to ensure correct topology and ER insertion of CAMLG. This is Guided entry of tail-anchored proteins factor 1 from Bos taurus (Bovine).